A 356-amino-acid chain; its full sequence is UDP-N-acetylglucosamine--N-acetylmuramyl-(pentapeptide) pyrophosphoryl-undecaprenol N-acetylglucosamine transferase (356 aa).

The UDP-N-acetyl-alpha-D-glucosamine site is built by Arg166, Ser196, and Gln290.

Belongs to the glycosyltransferase 28 family. MurG subfamily.

Its subcellular location is the cell membrane. It carries out the reaction Mur2Ac(oyl-L-Ala-gamma-D-Glu-L-Lys-D-Ala-D-Ala)-di-trans,octa-cis-undecaprenyl diphosphate + UDP-N-acetyl-alpha-D-glucosamine = beta-D-GlcNAc-(1-&gt;4)-Mur2Ac(oyl-L-Ala-gamma-D-Glu-L-Lys-D-Ala-D-Ala)-di-trans,octa-cis-undecaprenyl diphosphate + UDP + H(+). It functions in the pathway cell wall biogenesis; peptidoglycan biosynthesis. Functionally, cell wall formation. Catalyzes the transfer of a GlcNAc subunit on undecaprenyl-pyrophosphoryl-MurNAc-pentapeptide (lipid intermediate I) to form undecaprenyl-pyrophosphoryl-MurNAc-(pentapeptide)GlcNAc (lipid intermediate II). The chain is UDP-N-acetylglucosamine--N-acetylmuramyl-(pentapeptide) pyrophosphoryl-undecaprenol N-acetylglucosamine transferase from Staphylococcus aureus (strain Mu3 / ATCC 700698).